A 368-amino-acid chain; its full sequence is MTELKRTPLFDAHNRYGGKLVDFAGWEMSVQFEGLTAEHEAVRNAAGIFDVSHMGEIEVRGKDAEAFVQYLVTNDVAALEDNQIVYTFMCYPDGGIVDDLLVYKFNKEYYYLVVNASNSDKDFAWMNENKGAYDVEIINISDSVSQVAVQGPKAEEIVQELTDTDLSEIPFFYFKNDVVINGANCLISRTGYTGEDGFEIYVDNDKVDALWDKIIEVGKDRGLKPAGLGARDTLRFEATLPLYGHEIDKDISPLEAGLGFFVKLNKENFIGKDALVRQKEEGLKRKVVGFEMKENGIPRQGYEVKVGDKVIGVVTTGYNSPTLKKNIGYALIDAEYAALGTPIDIQVRKKTLKAEVVSKKFYTRSTKK.

It belongs to the GcvT family. In terms of assembly, the glycine cleavage system is composed of four proteins: P, T, L and H.

It carries out the reaction N(6)-[(R)-S(8)-aminomethyldihydrolipoyl]-L-lysyl-[protein] + (6S)-5,6,7,8-tetrahydrofolate = N(6)-[(R)-dihydrolipoyl]-L-lysyl-[protein] + (6R)-5,10-methylene-5,6,7,8-tetrahydrofolate + NH4(+). In terms of biological role, the glycine cleavage system catalyzes the degradation of glycine. In Alkaliphilus oremlandii (strain OhILAs) (Clostridium oremlandii (strain OhILAs)), this protein is Aminomethyltransferase.